Here is a 21-residue protein sequence, read N- to C-terminus: 23S rRNA methylase leader peptide (21 aa).

Its function is as follows. Involved in erythromycin resistance. This chain is 23S rRNA methylase leader peptide, found in Corynebacterium diphtheriae.